The chain runs to 137 residues: Small ribosomal subunit protein uS12 (137 aa).

This sequence belongs to the universal ribosomal protein uS12 family. In terms of assembly, part of the 30S ribosomal subunit. Contacts proteins S8 and S17. May interact with IF1 in the 30S initiation complex.

With S4 and S5 plays an important role in translational accuracy. Functionally, interacts with and stabilizes bases of the 16S rRNA that are involved in tRNA selection in the A site and with the mRNA backbone. Located at the interface of the 30S and 50S subunits, it traverses the body of the 30S subunit contacting proteins on the other side and probably holding the rRNA structure together. The combined cluster of proteins S8, S12 and S17 appears to hold together the shoulder and platform of the 30S subunit. The sequence is that of Small ribosomal subunit protein uS12 from Lactiplantibacillus plantarum (strain ATCC BAA-793 / NCIMB 8826 / WCFS1) (Lactobacillus plantarum).